A 245-amino-acid polypeptide reads, in one-letter code: Phosphoribosylaminoimidazole-succinocarboxamide synthase (245 aa).

Belongs to the SAICAR synthetase family.

It carries out the reaction 5-amino-1-(5-phospho-D-ribosyl)imidazole-4-carboxylate + L-aspartate + ATP = (2S)-2-[5-amino-1-(5-phospho-beta-D-ribosyl)imidazole-4-carboxamido]succinate + ADP + phosphate + 2 H(+). The protein operates within purine metabolism; IMP biosynthesis via de novo pathway; 5-amino-1-(5-phospho-D-ribosyl)imidazole-4-carboxamide from 5-amino-1-(5-phospho-D-ribosyl)imidazole-4-carboxylate: step 1/2. This chain is Phosphoribosylaminoimidazole-succinocarboxamide synthase, found in Acaryochloris marina (strain MBIC 11017).